The chain runs to 477 residues: Glutamate--tRNA ligase 2 (477 aa).

A 'HIGH' region motif is present at residues 12–22 (PSPTGRMHLGN). Cysteine 109, cysteine 111, cysteine 136, and histidine 138 together coordinate Zn(2+). A 'KMSKS' region motif is present at residues 253 to 257 (PLSKR). Lysine 256 contributes to the ATP binding site.

The protein belongs to the class-I aminoacyl-tRNA synthetase family. Glutamate--tRNA ligase type 1 subfamily. In terms of assembly, monomer. Zn(2+) is required as a cofactor.

Its subcellular location is the cytoplasm. It catalyses the reaction tRNA(Glu) + L-glutamate + ATP = L-glutamyl-tRNA(Glu) + AMP + diphosphate. Its function is as follows. Catalyzes the attachment of glutamate to tRNA(Glu) in a two-step reaction: glutamate is first activated by ATP to form Glu-AMP and then transferred to the acceptor end of tRNA(Glu). This is Glutamate--tRNA ligase 2 from Alkalilimnicola ehrlichii (strain ATCC BAA-1101 / DSM 17681 / MLHE-1).